We begin with the raw amino-acid sequence, 431 residues long: Citrate synthase (431 aa).

Active-site residues include histidine 306 and aspartate 364.

Belongs to the citrate synthase family.

The catalysed reaction is oxaloacetate + acetyl-CoA + H2O = citrate + CoA + H(+). It participates in carbohydrate metabolism; tricarboxylic acid cycle; isocitrate from oxaloacetate: step 1/2. This Bartonella henselae (strain ATCC 49882 / DSM 28221 / CCUG 30454 / Houston 1) (Rochalimaea henselae) protein is Citrate synthase (gltA).